The primary structure comprises 305 residues: Acyl transferase (305 aa).

Residues serine 116, aspartate 213, and histidine 243 each act as charge relay system in the active site.

Belongs to the LuxD family.

It participates in lipid metabolism; fatty acid reduction for biolumincescence. In terms of biological role, acyl transferase is part of the fatty acid reductase system required for aldehyde biosynthesis; it produces fatty acids for the luminescent reaction. The polypeptide is Acyl transferase (Photobacterium leiognathi).